The chain runs to 48 residues: Light-harvesting polypeptide B-885 beta-1 chain (48 aa).

At 1–20 (AEDRKSLSGLTEQEAQEFGT) the chain is on the cytoplasmic side. Residues 21–43 (LYTQGVAFVAVIAVVAHALVWAW) traverse the membrane as a helical segment. An a bacteriochlorophyll-binding site is contributed by histidine 37. The Periplasmic portion of the chain corresponds to 44-48 (RPWLQ).

The protein belongs to the antenna complex beta subunit family. As to quaternary structure, the core complex is formed by different alpha and beta chains, binding bacteriochlorophyll molecules, and arranged most probably in tetrameric structures disposed around the reaction center. The non-pigmented gamma chains may constitute additional components.

It is found in the cell inner membrane. Functionally, antenna complexes are light-harvesting systems, which transfer the excitation energy to the reaction centers. The chain is Light-harvesting polypeptide B-885 beta-1 chain from Rhodocyclus tenuis (Rhodospirillum tenue).